A 217-amino-acid chain; its full sequence is Cytidylate kinase (217 aa).

An ATP-binding site is contributed by 9 to 17 (GPAGAGKST).

This sequence belongs to the cytidylate kinase family. Type 1 subfamily.

The protein localises to the cytoplasm. The catalysed reaction is CMP + ATP = CDP + ADP. The enzyme catalyses dCMP + ATP = dCDP + ADP. The chain is Cytidylate kinase from Clostridium acetobutylicum (strain ATCC 824 / DSM 792 / JCM 1419 / IAM 19013 / LMG 5710 / NBRC 13948 / NRRL B-527 / VKM B-1787 / 2291 / W).